Here is a 236-residue protein sequence, read N- to C-terminus: 2-C-methyl-D-erythritol 4-phosphate cytidylyltransferase (236 aa).

This sequence belongs to the IspD/TarI cytidylyltransferase family. IspD subfamily.

The catalysed reaction is 2-C-methyl-D-erythritol 4-phosphate + CTP + H(+) = 4-CDP-2-C-methyl-D-erythritol + diphosphate. It participates in isoprenoid biosynthesis; isopentenyl diphosphate biosynthesis via DXP pathway; isopentenyl diphosphate from 1-deoxy-D-xylulose 5-phosphate: step 2/6. Functionally, catalyzes the formation of 4-diphosphocytidyl-2-C-methyl-D-erythritol from CTP and 2-C-methyl-D-erythritol 4-phosphate (MEP). The polypeptide is 2-C-methyl-D-erythritol 4-phosphate cytidylyltransferase (Pseudomonas syringae pv. syringae (strain B728a)).